A 194-amino-acid polypeptide reads, in one-letter code: Peptidyl-tRNA hydrolase (194 aa).

Tyr-17 serves as a coordination point for tRNA. His-22 functions as the Proton acceptor in the catalytic mechanism. The tRNA site is built by Phe-68, Asn-70, and Asn-116.

The protein belongs to the PTH family. As to quaternary structure, monomer.

The protein resides in the cytoplasm. It catalyses the reaction an N-acyl-L-alpha-aminoacyl-tRNA + H2O = an N-acyl-L-amino acid + a tRNA + H(+). In terms of biological role, hydrolyzes ribosome-free peptidyl-tRNAs (with 1 or more amino acids incorporated), which drop off the ribosome during protein synthesis, or as a result of ribosome stalling. Catalyzes the release of premature peptidyl moieties from peptidyl-tRNA molecules trapped in stalled 50S ribosomal subunits, and thus maintains levels of free tRNAs and 50S ribosomes. The chain is Peptidyl-tRNA hydrolase from Glaesserella parasuis serovar 5 (strain SH0165) (Haemophilus parasuis).